Here is a 220-residue protein sequence, read N- to C-terminus: N-(5'-phosphoribosyl)anthranilate isomerase (220 aa).

The protein belongs to the TrpF family.

It carries out the reaction N-(5-phospho-beta-D-ribosyl)anthranilate = 1-(2-carboxyphenylamino)-1-deoxy-D-ribulose 5-phosphate. It participates in amino-acid biosynthesis; L-tryptophan biosynthesis; L-tryptophan from chorismate: step 3/5. This is N-(5'-phosphoribosyl)anthranilate isomerase from Leptothrix cholodnii (strain ATCC 51168 / LMG 8142 / SP-6) (Leptothrix discophora (strain SP-6)).